Here is a 31-residue protein sequence, read N- to C-terminus: Cytochrome b6-f complex subunit 6 (31 aa).

Residues 4–24 (ITSYFGFLLAALTLTLALFIG) traverse the membrane as a helical segment.

This sequence belongs to the PetL family. In terms of assembly, the 4 large subunits of the cytochrome b6-f complex are cytochrome b6, subunit IV (17 kDa polypeptide, PetD), cytochrome f and the Rieske protein, while the 4 small subunits are PetG, PetL, PetM and PetN. The complex functions as a dimer.

It is found in the plastid. The protein resides in the chloroplast thylakoid membrane. Component of the cytochrome b6-f complex, which mediates electron transfer between photosystem II (PSII) and photosystem I (PSI), cyclic electron flow around PSI, and state transitions. PetL is important for photoautotrophic growth as well as for electron transfer efficiency and stability of the cytochrome b6-f complex. The protein is Cytochrome b6-f complex subunit 6 of Oryza sativa subsp. japonica (Rice).